Here is a 67-residue protein sequence, read N- to C-terminus: Beta-defensin 110 (67 aa).

A signal peptide spans 1–19 (MKIQLFFFILLFWVTILPA). 3 cysteine pairs are disulfide-bonded: C35–C63, C42–C56, and C46–C64.

This sequence belongs to the beta-defensin family.

It localises to the secreted. Has antibacterial activity. In Pan troglodytes (Chimpanzee), this protein is Beta-defensin 110 (DEFB110).